The chain runs to 67 residues: Metallothionein-B (67 aa).

Belongs to the metallothionein superfamily. Type 4 family.

Metallothioneins have a high content of cysteine residues that bind various heavy metals. The polypeptide is Metallothionein-B (Sphaerechinus granularis (Purple sea urchin)).